A 352-amino-acid chain; its full sequence is S-adenosylmethionine:tRNA ribosyltransferase-isomerase (352 aa).

Belongs to the QueA family. In terms of assembly, monomer.

The protein localises to the cytoplasm. The enzyme catalyses 7-aminomethyl-7-carbaguanosine(34) in tRNA + S-adenosyl-L-methionine = epoxyqueuosine(34) in tRNA + adenine + L-methionine + 2 H(+). It participates in tRNA modification; tRNA-queuosine biosynthesis. Its function is as follows. Transfers and isomerizes the ribose moiety from AdoMet to the 7-aminomethyl group of 7-deazaguanine (preQ1-tRNA) to give epoxyqueuosine (oQ-tRNA). This is S-adenosylmethionine:tRNA ribosyltransferase-isomerase from Vibrio cholerae serotype O1 (strain ATCC 39541 / Classical Ogawa 395 / O395).